Consider the following 340-residue polypeptide: DnaJ homolog subfamily B member 1 (340 aa).

The region spanning 2 to 70 (GKDYYQTLGL…REIFDRYGEE (69 aa)) is the J domain. Residues 68–90 (GEEGLKGSGPSGGSSGGTNGTSF) form a disordered region. Gly residues predominate over residues 73–86 (KGSGPSGGSSGGTN). Threonine 307 bears the Phosphothreonine mark.

As to quaternary structure, interacts with DNAJC3. Interacts with HSF1 (via transactivation domain); this interaction results in the inhibition of heat shock- and HSF1-induced transcriptional activity during the attenuation and recovery phase period of the heat shock response. Interacts with BAG3.

The protein localises to the cytoplasm. Its subcellular location is the nucleus. It localises to the nucleolus. Interacts with HSP70 and can stimulate its ATPase activity. Stimulates the association between HSC70 and HIP. Negatively regulates heat shock-induced HSF1 transcriptional activity during the attenuation and recovery phase period of the heat shock response. Stimulates ATP hydrolysis and the folding of unfolded proteins mediated by HSPA1A/B (in vitro). This chain is DnaJ homolog subfamily B member 1 (DNAJB1), found in Bos taurus (Bovine).